The following is a 476-amino-acid chain: Proline--tRNA ligase 2 (476 aa).

It belongs to the class-II aminoacyl-tRNA synthetase family. ProS type 3 subfamily. As to quaternary structure, homodimer.

It is found in the cytoplasm. The catalysed reaction is tRNA(Pro) + L-proline + ATP = L-prolyl-tRNA(Pro) + AMP + diphosphate. Its function is as follows. Catalyzes the attachment of proline to tRNA(Pro) in a two-step reaction: proline is first activated by ATP to form Pro-AMP and then transferred to the acceptor end of tRNA(Pro). This Bacillus cereus (strain ATCC 10987 / NRS 248) protein is Proline--tRNA ligase 2.